The sequence spans 106 residues: UPF0060 membrane protein R01043 (106 aa).

Helical transmembrane passes span 5–25 (AIYF…WSWL), 31–51 (ALWL…LTMV), 61–81 (AAYG…AEGV), and 85–105 (HWDM…LAGP).

The protein belongs to the UPF0060 family.

It localises to the cell inner membrane. The protein is UPF0060 membrane protein R01043 of Rhizobium meliloti (strain 1021) (Ensifer meliloti).